The primary structure comprises 597 residues: Ribosomal oxygenase 1 (597 aa).

Met1 is modified (N-acetylmethionine). Positions 1 to 138 (MDELPNGNGA…HVDDPERPWD (138 aa)) are disordered. Composition is skewed to basic residues over residues 14 to 24 (KRGRGRRRRQP) and 37 to 48 (RPRKVRRHRKSA). Positions 49–62 (ASRVAALRARALLS) are enriched in low complexity. Ser62 and Ser65 each carry phosphoserine. The span at 72-81 (VRGKRERPAE) shows a compositional bias: basic and acidic residues. Ser86 carries the phosphoserine modification. A JmjC domain is found at 250 to 395 (CSLRLLCPQA…DFLEAVLPLA (146 aa)). 3 residues coordinate Fe cation: His296, Asp298, and His361.

The protein belongs to the ROX family. NO66 subfamily. As to quaternary structure, interacts with SP7/OSX; the interaction is direct. Interacts with MYC. Interacts with PHF19; leading to its recruitment to H3K36me3 sites. The cofactor is Fe(2+).

It localises to the nucleus. It is found in the nucleolus. The protein localises to the nucleoplasm. It carries out the reaction N(6),N(6)-dimethyl-L-lysyl(36)-[histone H3] + 2 2-oxoglutarate + 2 O2 = L-lysyl(36)-[histone H3] + 2 formaldehyde + 2 succinate + 2 CO2. The catalysed reaction is N(6)-methyl-L-lysyl-[protein] + 2-oxoglutarate + O2 = L-lysyl-[protein] + formaldehyde + succinate + CO2. It catalyses the reaction L-histidyl-[protein] + 2-oxoglutarate + O2 = (3S)-3-hydroxy-L-histidyl-[protein] + succinate + CO2. In terms of biological role, oxygenase that can act as both a histone lysine demethylase and a ribosomal histidine hydroxylase. Specifically demethylates 'Lys-4' (H3K4me) and 'Lys-36' (H3K36me) of histone H3, thereby playing a central role in histone code. Preferentially demethylates trimethylated H3 'Lys-4' (H3K4me3) and monomethylated H3 'Lys-4' (H3K4me1) residues, while it has weaker activity for dimethylated H3 'Lys-36' (H3K36me2). Acts as a regulator of osteoblast differentiation via its interaction with SP7/OSX by demethylating H3K4me and H3K36me, thereby inhibiting SP7/OSX-mediated promoter activation. Also catalyzes demethylation of non-histone proteins, such as CGAS: demethylation of monomethylated CGAS promotes interaction between CGAS and PARP1, followed by PARP1 inactivation. Also catalyzes the hydroxylation of 60S ribosomal protein L8 on 'His-216', thereby playing a role in ribosome biogenesis. Participates in MYC-induced transcriptional activation. The protein is Ribosomal oxygenase 1 of Rattus norvegicus (Rat).